The following is a 106-amino-acid chain: NADH dehydrogenase [ubiquinone] iron-sulfur protein 5 (106 aa).

The 45-residue stretch at Ala30–Arg74 folds into the CHCH domain. Short sequence motifs (cx9C motif) lie at residues Cys33–Cys43 and Cys56–Cys66. Disulfide bonds link Cys33/Cys66 and Cys43/Cys56. Residues Asp84–Pro106 are disordered.

The protein belongs to the complex I NDUFS5 subunit family. As to quaternary structure, mammalian complex I is composed of 45 different subunits. This is a component of the iron-sulfur (IP) fragment of the enzyme.

The protein resides in the mitochondrion inner membrane. Its subcellular location is the mitochondrion intermembrane space. Accessory subunit of the mitochondrial membrane respiratory chain NADH dehydrogenase (Complex I), that is believed not to be involved in catalysis. Complex I functions in the transfer of electrons from NADH to the respiratory chain. The immediate electron acceptor for the enzyme is believed to be ubiquinone. This Gorilla gorilla gorilla (Western lowland gorilla) protein is NADH dehydrogenase [ubiquinone] iron-sulfur protein 5 (NDUFS5).